The sequence spans 346 residues: MHVISLSLSSIFFFLFLTSTILISPVQPTTSKPPAPRPHRELSADYYSKKCPQLETLVGSVTSQRFKEVPISAPATIRLFFHDCFVEGCDGSILIETKKGSKKLAEREAYENKELREEGFDSIIKAKALVESHCPSLVSCSDILAIAARDFIHLAGGPYYQVKKGRWDGKRSTAKNVPPNIPRSNSTVDQLIKLFASKGLTVEELVVLSGSHTIGFAHCKNFLGRLYDYKGTKRPDPSLDQRLLKELRMSCPFSGGSSGVVLPLDATTPFVFDNGYFTGLGTNMGLLGSDQALFLDPRTKPIALEMARDKQKFLKAFGDAMDKMGSIGVKRGKRHGEIRTDCRVFL.

The signal sequence occupies residues 1-31 (MHVISLSLSSIFFFLFLTSTILISPVQPTTS). Intrachain disulfides connect cysteine 51-cysteine 134, cysteine 84-cysteine 89, cysteine 140-cysteine 342, and cysteine 219-cysteine 251. The Proton acceptor role is filled by histidine 82. Ca(2+) is bound by residues aspartate 83, valine 86, glycine 88, aspartate 90, and serine 92. Residue proline 182 coordinates substrate. Asparagine 185 carries N-linked (GlcNAc...) asparagine glycosylation. Histidine 212 contributes to the heme b binding site. Threonine 213 is a binding site for Ca(2+). Aspartate 265, threonine 268, and aspartate 273 together coordinate Ca(2+).

The protein belongs to the peroxidase family. Classical plant (class III) peroxidase subfamily. Heme b serves as cofactor. It depends on Ca(2+) as a cofactor.

It is found in the secreted. It catalyses the reaction 2 a phenolic donor + H2O2 = 2 a phenolic radical donor + 2 H2O. Its function is as follows. Removal of H(2)O(2), oxidation of toxic reductants, biosynthesis and degradation of lignin, suberization, auxin catabolism, response to environmental stresses such as wounding, pathogen attack and oxidative stress. These functions might be dependent on each isozyme/isoform in each plant tissue. In Arabidopsis thaliana (Mouse-ear cress), this protein is Peroxidase 19 (PER19).